The following is a 280-amino-acid chain: Bifunctional protein FolD (280 aa).

NADP(+) contacts are provided by residues 159-161 (GRS), Ser184, and Ile225.

It belongs to the tetrahydrofolate dehydrogenase/cyclohydrolase family. Homodimer.

The enzyme catalyses (6R)-5,10-methylene-5,6,7,8-tetrahydrofolate + NADP(+) = (6R)-5,10-methenyltetrahydrofolate + NADPH. The catalysed reaction is (6R)-5,10-methenyltetrahydrofolate + H2O = (6R)-10-formyltetrahydrofolate + H(+). Its pathway is one-carbon metabolism; tetrahydrofolate interconversion. Catalyzes the oxidation of 5,10-methylenetetrahydrofolate to 5,10-methenyltetrahydrofolate and then the hydrolysis of 5,10-methenyltetrahydrofolate to 10-formyltetrahydrofolate. The protein is Bifunctional protein FolD of Methanosphaerula palustris (strain ATCC BAA-1556 / DSM 19958 / E1-9c).